The following is a 401-amino-acid chain: Enolase (401 aa).

Position 154 (glutamine 154) interacts with (2R)-2-phosphoglycerate. Glutamate 197 serves as the catalytic Proton donor. Residues aspartate 233, glutamate 274, and aspartate 301 each coordinate Mg(2+). (2R)-2-phosphoglycerate-binding residues include lysine 326, arginine 355, serine 356, and lysine 377. Lysine 326 serves as the catalytic Proton acceptor.

This sequence belongs to the enolase family. Mg(2+) serves as cofactor.

Its subcellular location is the cytoplasm. The protein localises to the secreted. The protein resides in the cell surface. The catalysed reaction is (2R)-2-phosphoglycerate = phosphoenolpyruvate + H2O. It participates in carbohydrate degradation; glycolysis; pyruvate from D-glyceraldehyde 3-phosphate: step 4/5. Its function is as follows. Catalyzes the reversible conversion of 2-phosphoglycerate (2-PG) into phosphoenolpyruvate (PEP). It is essential for the degradation of carbohydrates via glycolysis. This is Enolase from Thermoplasma acidophilum (strain ATCC 25905 / DSM 1728 / JCM 9062 / NBRC 15155 / AMRC-C165).